The chain runs to 67 residues: Brevinin-1CDYa (67 aa).

The N-terminal stretch at 1-22 (MFTLKKSLLLIFFLGTINLSLC) is a signal peptide. A propeptide spanning residues 23-45 (EEERNADEEERRDDLEERDVEVE) is cleaved from the precursor. A disulfide bond links cysteine 61 and cysteine 67.

This sequence belongs to the frog skin active peptide (FSAP) family. Brevinin subfamily. Expressed by the skin glands.

Its subcellular location is the secreted. Antimicrobial peptide. Has low activity against the Gram-positive bacterium S.aureus (MIC=12.5 uM) and the Gram-negative bacterium E.coli (MIC=25 uM). Has weak hemolytic activity against human erythrocytes. The protein is Brevinin-1CDYa of Rana dybowskii (Dybovsky's frog).